A 327-amino-acid chain; its full sequence is Transcription factor bHLH71 (327 aa).

Disordered regions lie at residues 46-88 and 151-176; these read ISEI…NQRM and AKLNQSVTSSTSQDSNGEQENPHQPS. Residues 65 to 76 are compositionally biased toward basic residues; it reads RGKKRRRRKPRV. Over residues 77–88 the composition is skewed to basic and acidic residues; sequence CKNEEEAENQRM. A bHLH domain is found at 85–136; that stretch reads NQRMTHIAVERNRRRQMNQHLSVLRSLMPQPFAHKGDQASIVGGAIDFIKEL. Positions 152-169 are enriched in polar residues; that stretch reads KLNQSVTSSTSQDSNGEQ.

As to quaternary structure, homodimer. Interacts with FAMA. Expressed in leaves, stems, and flowers.

It localises to the nucleus. Functionally, transcription factor. May be involved in the differentiation of stomatal guard cells. The protein is Transcription factor bHLH71 (BHLH71) of Arabidopsis thaliana (Mouse-ear cress).